The primary structure comprises 139 residues: Large-conductance mechanosensitive channel (139 aa).

2 helical membrane-spanning segments follow: residues 16–36 and 79–99; these read VIDLAVGVIIGAAFNGIVKSL and GAFVNTVIQFFIVATVVFLLV.

This sequence belongs to the MscL family. In terms of assembly, homopentamer.

It is found in the cell inner membrane. Functionally, channel that opens in response to stretch forces in the membrane lipid bilayer. May participate in the regulation of osmotic pressure changes within the cell. The polypeptide is Large-conductance mechanosensitive channel (Caulobacter vibrioides (strain ATCC 19089 / CIP 103742 / CB 15) (Caulobacter crescentus)).